Reading from the N-terminus, the 302-residue chain is Putative S-adenosyl-L-methionine-dependent methyltransferase MUL_2961 (302 aa).

S-adenosyl-L-methionine contacts are provided by residues D128 and D157–L158.

The protein belongs to the UPF0677 family.

Exhibits S-adenosyl-L-methionine-dependent methyltransferase activity. This chain is Putative S-adenosyl-L-methionine-dependent methyltransferase MUL_2961, found in Mycobacterium ulcerans (strain Agy99).